A 218-amino-acid polypeptide reads, in one-letter code: DNA-directed RNA polymerases IV and V subunit 5B (218 aa).

It belongs to the archaeal Rpo5/eukaryotic RPB5 RNA polymerase subunit family. Component of the RNA polymerase IV and V complexes. Interacts with NRPD1. Expressed inleaves, flower buds, flowers and siliques.

Its subcellular location is the nucleus. Its function is as follows. DNA-dependent RNA polymerase catalyzes the transcription of DNA into RNA using the four ribonucleoside triphosphates as substrates. Component of RNA polymerases IV and V which mediate short-interfering RNAs (siRNA) accumulation and subsequent RNA-directed DNA methylation-dependent (RdDM) transcriptional gene silencing (TGS) of endogenous repeated sequences, including transposable elements. The chain is DNA-directed RNA polymerases IV and V subunit 5B (NRPD5B) from Arabidopsis thaliana (Mouse-ear cress).